Consider the following 277-residue polypeptide: MALKTFNPTTPGQRQLVMVDRSALYKGKPVKALTEGKLSSGGRNNTGRITVRFLGGGHKQSYRMVDFKRDKVDVPATVERLEYDPNRTAFIALVKYQDGELAYILAPQRLAVGDTIVAGNYVDVKPGNVMPLGNMPVGTIVHNIEVKIGKGGQLARSAGTYAQIVGRDQDYVIVRLNSGEQRLVHGRCRGTIGAVSNPDHMNTSIGKAGRKRWMGRRPHNRGVAMNPIDHPHGGGEGRTSGGRHPVTPWGKPTKGKKTRTNKSTDKFILLSRHKRKK.

The tract at residues G222–D265 is disordered.

This sequence belongs to the universal ribosomal protein uL2 family. In terms of assembly, part of the 50S ribosomal subunit. Forms a bridge to the 30S subunit in the 70S ribosome.

Functionally, one of the primary rRNA binding proteins. Required for association of the 30S and 50S subunits to form the 70S ribosome, for tRNA binding and peptide bond formation. It has been suggested to have peptidyltransferase activity; this is somewhat controversial. Makes several contacts with the 16S rRNA in the 70S ribosome. The chain is Large ribosomal subunit protein uL2 from Bradyrhizobium sp. (strain BTAi1 / ATCC BAA-1182).